The chain runs to 437 residues: Diaminopimelate decarboxylase (437 aa).

Lys81 is subject to N6-(pyridoxal phosphate)lysine. Pyridoxal 5'-phosphate-binding positions include Gly256 and 298 to 301 (EPGR). Substrate-binding residues include Arg301, Arg337, and Tyr341. Cys366 (proton donor) is an active-site residue. 2 residues coordinate substrate: Glu367 and Tyr396. A pyridoxal 5'-phosphate-binding site is contributed by Tyr396.

It belongs to the Orn/Lys/Arg decarboxylase class-II family. LysA subfamily. In terms of assembly, homodimer. Pyridoxal 5'-phosphate serves as cofactor.

It catalyses the reaction meso-2,6-diaminopimelate + H(+) = L-lysine + CO2. Its pathway is amino-acid biosynthesis; L-lysine biosynthesis via DAP pathway; L-lysine from DL-2,6-diaminopimelate: step 1/1. Its function is as follows. Specifically catalyzes the decarboxylation of meso-diaminopimelate (meso-DAP) to L-lysine. The chain is Diaminopimelate decarboxylase from Actinosynnema pretiosum subsp. auranticum.